Reading from the N-terminus, the 487-residue chain is b(0,+)-type amino acid transporter 1 (487 aa).

Residues 1-22 (MGETVPRRRREDEKSIQSDEPK) are disordered. Residues 1–31 (MGETVPRRRREDEKSIQSDEPKTTSLQKEVG) are Cytoplasmic-facing. Serine 18 carries the post-translational modification Phosphoserine. Residues 32–55 (LISGICIIVGTIIGSGIFISPKSV) form a helical membrane-spanning segment. Position 43–47 (43–47 (IIGSG)) interacts with L-arginine. The Extracellular segment spans residues 56–62 (LSNTQAV). Residues 63–84 (GPCLIIWAACGVLGTLGALCFA) form a helical membrane-spanning segment. Residues 85–110 (ELGTMITKSGGEYPYLMEAFGPIPAY) lie on the Cytoplasmic side of the membrane. A helical membrane pass occupies residues 111–137 (LFSWSSLLVMKPSSFAIICLSFSEYVA). Over 138–147 (TPFYSGCEPP) the chain is Extracellular. 2 consecutive transmembrane segments (helical) span residues 148–169 (KVVV…NSLS) and 170–193 (VRLG…IIII). Residues 194–217 (SGLVLLAQGNTKNFENSFEGAEVS) are Extracellular-facing. Residues 218–238 (VGAISLALYNGLWAYDGWNQL) traverse the membrane as a helical segment. Aspartate 233 is an L-arginine binding site. At 239–251 (NYITEELRNPFRN) the chain is on the cytoplasmic side. The chain crosses the membrane as a helical span at residues 252–274 (LPLAIIFGIPLVTVCYILINISY). Topologically, residues 275–302 (FTVMTPTELLQSQAVAVTFGDRVLYPAS) are extracellular. The chain crosses the membrane as a helical span at residues 303-325 (WIVPVFVAFSTIGAANGTCFTAG). Residues 326–351 (RLVYVAGREGHMLKVLSYISVRRLTP) lie on the Cytoplasmic side of the membrane. 2 helical membrane-spanning segments follow: residues 352-370 (APAI…IPGD) and 371-391 (INSL…LTIL). Topologically, residues 392-410 (GLIVMRFTRKELERPIKVP) are cytoplasmic. A helical transmembrane segment spans residues 411–431 (IFIPILVTFIAAFLVLAPVIT). Over 432 to 434 (NPA) the chain is Extracellular. The helical transmembrane segment at 435 to 450 (WEYLYCVLFILSGLVF) threads the bilayer. Residues 451-487 (YFLFVYYKFEWAQKISKPITMHLQMLMEVVPPEPDPK) are Cytoplasmic-facing.

It belongs to the amino acid-polyamine-organocation (APC) superfamily. In terms of assembly, disulfide-linked heterodimer composed of the catalytic light chain subunit SLC7A9 and the heavy chain subunit. The heterodimer is the minimal functional unit. Assembles in heterotetramers (dimers of heterodimers) and higher order oligomers. Interacts with CAV1. In terms of tissue distribution, kidney and small intestine.

Its subcellular location is the apical cell membrane. The catalysed reaction is L-leucine(out) + L-arginine(in) = L-leucine(in) + L-arginine(out). It catalyses the reaction L-histidine(out) + L-arginine(in) = L-histidine(in) + L-arginine(out). It carries out the reaction L-arginine(in) + L-phenylalanine(out) = L-arginine(out) + L-phenylalanine(in). The enzyme catalyses L-cysteine(out) + L-arginine(in) = L-cysteine(in) + L-arginine(out). The catalysed reaction is L-cystine(out) + L-arginine(in) = L-cystine(in) + L-arginine(out). It catalyses the reaction L-lysine(out) + L-arginine(in) = L-lysine(in) + L-arginine(out). In terms of biological role, mediates the electrogenic exchange between cationic amino acids and neutral amino acids, with a stoichiometry of 1:1. Has system b(0,+)-like activity with high affinity for extracellular cationic amino acids and L-cystine and lower affinity for intracellular neutral amino acids. Substrate exchange is driven by high concentration of intracellular neutral amino acids and the intracellular reduction of L-cystine to L-cysteine. Required for reabsorption of L-cystine and dibasic amino acids across the brush border membrane in renal proximal tubules. In Oryctolagus cuniculus (Rabbit), this protein is b(0,+)-type amino acid transporter 1.